Reading from the N-terminus, the 160-residue chain is Ribosomal RNA large subunit methyltransferase H (160 aa).

Positions 76 and 108 each coordinate S-adenosyl-L-methionine.

It belongs to the RNA methyltransferase RlmH family. Homodimer.

It is found in the cytoplasm. It carries out the reaction pseudouridine(1915) in 23S rRNA + S-adenosyl-L-methionine = N(3)-methylpseudouridine(1915) in 23S rRNA + S-adenosyl-L-homocysteine + H(+). Specifically methylates the pseudouridine at position 1915 (m3Psi1915) in 23S rRNA. In Nitrobacter hamburgensis (strain DSM 10229 / NCIMB 13809 / X14), this protein is Ribosomal RNA large subunit methyltransferase H.